The sequence spans 633 residues: Pesticidal crystal protein Cry2Ab (633 aa).

The protein belongs to the delta endotoxin family.

Functionally, promotes colloidosmotic lysis by binding to the midgut epithelial cells of lepidopteran (Manduca sexta) larvae. The protein is Pesticidal crystal protein Cry2Ab (cry2Ab) of Bacillus thuringiensis subsp. kurstaki.